The chain runs to 538 residues: MNEEQRLGRNGNTDAVSTKEAGSATKDYSKYFDFSNAKVVSEEDGKKVIKIAGREISIFDQPDYKQGKRRGKEEVKVLRPDDLIPEDMKTIGAGKKFLVRTYGCQMNIHDSENMAGMLKEMGFEATDETTDADVILINTCAIRENAENKVFGEIGNLKQLKREKPELVIGVCGCMSQEEGVVNRIMQKHQHIDMIFGTHNIHRLPHLLRNALFGKEMIIEVWSKEGDIVENMPRAREGKTQAWVNIMYGCDKFCTYCIVPYTRGKERSRRPEDIIQEVRDLARQGYKEITLLGQNVNAYGKDLADLDYGLGDLMDEIRKIDIPRVRFTTSHPRDFDDHLIEVLAKGGNLVEHIHLPVQHGNSEILKLMARKYTREQYVELAQKIKRAIPNASFTTDLIVGFPNETDEQFEDTLSLVREIEFDSAFTYIYSPREGTPAAKMKDNVPMEVKRERLARLNALVNDISAQKNLEYQDKVVEVLVEGESKKDPNILAGRTRTNRLVNFKGPKSVIGDIVYVKVTEAKTWSLNGEMVEMAEVNG.

Residues 1–23 (MNEEQRLGRNGNTDAVSTKEAGS) are disordered. The region spanning 95 to 213 (KKFLVRTYGC…LPHLLRNALF (119 aa)) is the MTTase N-terminal domain. Residues cysteine 104, cysteine 140, cysteine 174, cysteine 250, cysteine 254, and cysteine 257 each coordinate [4Fe-4S] cluster. In terms of domain architecture, Radical SAM core spans 236–466 (REGKTQAWVN…NALVNDISAQ (231 aa)). The TRAM domain maps to 469-532 (LEYQDKVVEV…TWSLNGEMVE (64 aa)).

The protein belongs to the methylthiotransferase family. MiaB subfamily. Monomer. [4Fe-4S] cluster is required as a cofactor.

The protein resides in the cytoplasm. It catalyses the reaction N(6)-dimethylallyladenosine(37) in tRNA + (sulfur carrier)-SH + AH2 + 2 S-adenosyl-L-methionine = 2-methylsulfanyl-N(6)-dimethylallyladenosine(37) in tRNA + (sulfur carrier)-H + 5'-deoxyadenosine + L-methionine + A + S-adenosyl-L-homocysteine + 2 H(+). Catalyzes the methylthiolation of N6-(dimethylallyl)adenosine (i(6)A), leading to the formation of 2-methylthio-N6-(dimethylallyl)adenosine (ms(2)i(6)A) at position 37 in tRNAs that read codons beginning with uridine. This is tRNA-2-methylthio-N(6)-dimethylallyladenosine synthase from Halalkalibacterium halodurans (strain ATCC BAA-125 / DSM 18197 / FERM 7344 / JCM 9153 / C-125) (Bacillus halodurans).